Here is a 346-residue protein sequence, read N- to C-terminus: Angiopoietin-related protein 7 (346 aa).

Positions methionine 1 to leucine 26 are cleaved as a signal peptide. The stretch at glutamine 39–threonine 119 forms a coiled coil. N-linked (GlcNAc...) asparagine glycosylation occurs at asparagine 58. Residues glutamine 122–aspartate 343 enclose the Fibrinogen C-terminal domain. Cysteine 131 and cysteine 162 form a disulfide bridge. N-linked (GlcNAc...) asparagine glycosylation is found at asparagine 253 and asparagine 267. A disulfide bond links cysteine 285 and cysteine 298.

Homotetramer; disulfide-linked. As to expression, highly expressed in the cornea (at protein level). Expression is restricted to the stromal layer. Also detected at the junction between the corneal stromal layer and the conjuctiva. Not detected in the sclera.

The protein resides in the secreted. Its function is as follows. Has a role in the formation and organization of the extracellular matrix. In the eye, it functions as a mediator of dexamethasone-induced matrix deposition in the trabecular meshwork, the tissue responsible for the outflow of the ocular aqueous humor and for the maintenance of intraocular pressure. Is a negative regulator of angiogenesis in the cornea, and plays a major role in maintaining corneal avascularity and transparency. This Homo sapiens (Human) protein is Angiopoietin-related protein 7 (ANGPTL7).